The sequence spans 215 residues: Cytochrome b6 (215 aa).

Residues isoleucine 32–phenylalanine 52 form a helical membrane-spanning segment. Residue cysteine 35 coordinates heme c. Heme b contacts are provided by histidine 86 and histidine 100. 3 helical membrane-spanning segments follow: residues alanine 90–phenylalanine 110, leucine 116–tyrosine 136, and alanine 186–isoleucine 206. Heme b contacts are provided by histidine 187 and histidine 202.

This sequence belongs to the cytochrome b family. PetB subfamily. The 4 large subunits of the cytochrome b6-f complex are cytochrome b6, subunit IV (17 kDa polypeptide, PetD), cytochrome f and the Rieske protein, while the 4 small subunits are PetG, PetL, PetM and PetN. The complex functions as a dimer. Heme b serves as cofactor. It depends on heme c as a cofactor.

The protein localises to the plastid. Its subcellular location is the chloroplast thylakoid membrane. Functionally, component of the cytochrome b6-f complex, which mediates electron transfer between photosystem II (PSII) and photosystem I (PSI), cyclic electron flow around PSI, and state transitions. This is Cytochrome b6 from Phaeodactylum tricornutum (strain CCAP 1055/1).